Consider the following 195-residue polypeptide: Alkyl hydroperoxide reductase C (195 aa).

The Thioredoxin domain maps to leucine 4 to serine 170. Lysine 41 is covalently cross-linked (Isoglutamyl lysine isopeptide (Lys-Gln) (interchain with Q-Cter in protein Pup)). The active-site Cysteine sulfenic acid (-SOH) intermediate is cysteine 61.

It belongs to the peroxiredoxin family. AhpC/Prx1 subfamily. Homodimer; disulfide-linked, upon oxidation. 6 homodimers assemble to form a ring-like dodecamer. Identified in a complex with AhpD, DlaT and Lpd.

The protein localises to the cytoplasm. It catalyses the reaction N(6)-[(R)-dihydrolipoyl]-L-lysyl-[lipoyl-carrier protein] + a hydroperoxide = N(6)-[(R)-lipoyl]-L-lysyl-[lipoyl-carrier protein] + an alcohol + H2O. Its function is as follows. Thiol-specific peroxidase that catalyzes the reduction of hydrogen peroxide and organic hydroperoxides to water and alcohols, respectively. Plays a role in cell protection against oxidative stress by detoxifying peroxides. Together with AhpD, DlaT and Lpd, constitutes an NADH-dependent peroxidase active against hydrogen and alkyl peroxides as well as serving as a peroxynitrite reductase, thus protecting the bacterium against reactive nitrogen intermediates and oxidative stress generated by the host immune system. Does not however seem to play a role in detoxification of isoniazid. The protein is Alkyl hydroperoxide reductase C of Mycolicibacterium smegmatis (strain ATCC 700084 / mc(2)155) (Mycobacterium smegmatis).